A 63-amino-acid chain; its full sequence is Cysteine-rich peptide clone 2 (63 aa).

The N-terminal stretch at 1–23 (MHFSGVVLILLSMTLVNFVFVET) is a signal peptide. 3 cysteine pairs are disulfide-bonded: cysteine 33–cysteine 53, cysteine 38–cysteine 58, and cysteine 42–cysteine 60.

As to expression, expressed by the venom gland.

It localises to the secreted. This Tityus costatus (Brazilian scorpion) protein is Cysteine-rich peptide clone 2.